Reading from the N-terminus, the 142-residue chain is Hemoglobin cathodic subunit alpha (142 aa).

Ser1 bears the N-acetylserine mark. Residues 1–142 (SLTAKDKALV…LSSTAADKYR (142 aa)) form the Globin domain. His59 provides a ligand contact to O2. Position 88 (His88) interacts with heme b.

The protein belongs to the globin family. Heterotetramer of two alpha chains and two beta chains.

Involved in oxygen transport from gills to the various peripheral tissues. In Hoplosternum littorale (Hassar), this protein is Hemoglobin cathodic subunit alpha.